The chain runs to 368 residues: 1-deoxy-D-xylulose 5-phosphate reductoisomerase (368 aa).

Thr-7, Gly-8, Ser-9, Ile-10, Gly-31, Lys-32, Asn-33, and Asn-113 together coordinate NADPH. Lys-114 serves as a coordination point for 1-deoxy-D-xylulose 5-phosphate. NADPH is bound at residue Glu-115. Mn(2+) is bound at residue Asp-133. Residues Ser-134, Glu-135, Ser-158, and His-181 each contribute to the 1-deoxy-D-xylulose 5-phosphate site. Mn(2+) is bound at residue Glu-135. Residue Gly-187 coordinates NADPH. 4 residues coordinate 1-deoxy-D-xylulose 5-phosphate: Ser-194, Asn-199, Lys-200, and Glu-203. Glu-203 contributes to the Mn(2+) binding site.

This sequence belongs to the DXR family. Mg(2+) is required as a cofactor. It depends on Mn(2+) as a cofactor.

It carries out the reaction 2-C-methyl-D-erythritol 4-phosphate + NADP(+) = 1-deoxy-D-xylulose 5-phosphate + NADPH + H(+). The protein operates within isoprenoid biosynthesis; isopentenyl diphosphate biosynthesis via DXP pathway; isopentenyl diphosphate from 1-deoxy-D-xylulose 5-phosphate: step 1/6. In terms of biological role, catalyzes the NADPH-dependent rearrangement and reduction of 1-deoxy-D-xylulose-5-phosphate (DXP) to 2-C-methyl-D-erythritol 4-phosphate (MEP). This Helicobacter pylori (strain Shi470) protein is 1-deoxy-D-xylulose 5-phosphate reductoisomerase.